Reading from the N-terminus, the 291-residue chain is Pituitary-specific positive transcription factor 1 (291 aa).

A 9aaTAD motif is present at residues 5–13 (PFTSTDTFI). The POU-specific domain maps to 124 to 198 (MDSPEIRELE…ILSKWLEEAE (75 aa)). Residues 214–273 (KRKRRTTISIAAKDALERHFGEQNKPSSQEILRMAEELNLEKEVVRVWFCNRRQREKRVK) constitute a DNA-binding region (homeobox).

It belongs to the POU transcription factor family. Class-1 subfamily. Interacts with PITX1. Interacts with LHX3. Interacts with ELK1.

It localises to the nucleus. Its function is as follows. Transcription factor involved in the specification of the lactotrope, somatotrope, and thyrotrope phenotypes in the developing anterior pituitary. Activates growth hormone and prolactin genes. Specifically binds to the consensus sequence 5'-TAAAT-3'. This is Pituitary-specific positive transcription factor 1 (POU1F1) from Bos taurus (Bovine).